A 193-amino-acid chain; its full sequence is Imidazoleglycerol-phosphate dehydratase (193 aa).

Belongs to the imidazoleglycerol-phosphate dehydratase family.

It localises to the cytoplasm. It carries out the reaction D-erythro-1-(imidazol-4-yl)glycerol 3-phosphate = 3-(imidazol-4-yl)-2-oxopropyl phosphate + H2O. The protein operates within amino-acid biosynthesis; L-histidine biosynthesis; L-histidine from 5-phospho-alpha-D-ribose 1-diphosphate: step 6/9. The protein is Imidazoleglycerol-phosphate dehydratase (hisB) of Saccharolobus solfataricus (strain ATCC 35092 / DSM 1617 / JCM 11322 / P2) (Sulfolobus solfataricus).